A 295-amino-acid chain; its full sequence is ATP synthase gamma chain (295 aa).

Belongs to the ATPase gamma chain family. As to quaternary structure, F-type ATPases have 2 components, CF(1) - the catalytic core - and CF(0) - the membrane proton channel. CF(1) has five subunits: alpha(3), beta(3), gamma(1), delta(1), epsilon(1). CF(0) has three main subunits: a, b and c.

Its subcellular location is the cell inner membrane. Its function is as follows. Produces ATP from ADP in the presence of a proton gradient across the membrane. The gamma chain is believed to be important in regulating ATPase activity and the flow of protons through the CF(0) complex. This chain is ATP synthase gamma chain, found in Paraburkholderia phymatum (strain DSM 17167 / CIP 108236 / LMG 21445 / STM815) (Burkholderia phymatum).